A 391-amino-acid polypeptide reads, in one-letter code: 2,4,6-trihydroxybenzophenone synthase (391 aa).

Residue Cys165 is part of the active site.

It belongs to the thiolase-like superfamily. Chalcone/stilbene synthases family. As to quaternary structure, homodimer. In terms of tissue distribution, expressed in young fruit pericarp.

The enzyme catalyses benzoyl-CoA + 3 malonyl-CoA + 2 H(+) = 2,4,6-trihydroxybenzophenone + 3 CO2 + 4 CoA. Its function is as follows. Type III polyketide synthase involved in the biosynthesis of benzophenones and xanthones. Produces mainly 2,4,6-trihydroxybenzophenone together with minor amounts of tetraketide lactone, triketide lactone and diketide lactone. The preferred substrate is benzoyl-CoA, but can also use acetyl-CoA, phenylacetyl-CoA, hexanoyl-CoA, cinnamoyl-CoA, p-coumaroyl-CoA and salicoyl-CoA. This chain is 2,4,6-trihydroxybenzophenone synthase (BPS), found in Garcinia mangostana (Mangosteen).